The primary structure comprises 236 residues: MKIGIIGAMEPEVAHLIAAMTNATSQTIAGIEFIAGTLAGKDVVVTRSGIGKVAASIATTLLIEKYAPDAMINTGSAGGFVDTLAIGDIVISSEVRHHDVDVTAFGYEIGQMAQQPAAFIPAAHLVEAANKAIAQLGEVKAIEGLICTGDSFICDPVRTQAMLKNFPTMAACEMEGAAIAQVCHQFGVPFVVIRSLSDNANNDSPVDFDSYIVKAGYHSALMVMLLLEQLNPSAVK.

The active-site Proton acceptor is the Glu-12. Substrate is bound by residues Gly-78, Ile-153, and 174–175; that span reads ME. Asp-198 acts as the Proton donor in catalysis.

This sequence belongs to the PNP/UDP phosphorylase family. MtnN subfamily.

It carries out the reaction S-adenosyl-L-homocysteine + H2O = S-(5-deoxy-D-ribos-5-yl)-L-homocysteine + adenine. It catalyses the reaction S-methyl-5'-thioadenosine + H2O = 5-(methylsulfanyl)-D-ribose + adenine. The enzyme catalyses 5'-deoxyadenosine + H2O = 5-deoxy-D-ribose + adenine. It participates in amino-acid biosynthesis; L-methionine biosynthesis via salvage pathway; S-methyl-5-thio-alpha-D-ribose 1-phosphate from S-methyl-5'-thioadenosine (hydrolase route): step 1/2. Functionally, catalyzes the irreversible cleavage of the glycosidic bond in both 5'-methylthioadenosine (MTA) and S-adenosylhomocysteine (SAH/AdoHcy) to adenine and the corresponding thioribose, 5'-methylthioribose and S-ribosylhomocysteine, respectively. Also cleaves 5'-deoxyadenosine, a toxic by-product of radical S-adenosylmethionine (SAM) enzymes, into 5-deoxyribose and adenine. This chain is 5'-methylthioadenosine/S-adenosylhomocysteine nucleosidase, found in Shewanella baltica (strain OS155 / ATCC BAA-1091).